Consider the following 304-residue polypeptide: MRKNESSLTSLISAFARAYHSRYDTPLIFDDFIAKDLINEKEFIDISKNMIQEISFFNKEIAERLQNDPEKILKWVAQIQLSPTPLARASYCEKVLHNELILGAKQYVILGAGLDTFCFRHPELENSLQVFEVDHPATQQLKKNKLKDANLTIPGHLHFVPMDFTKTFSYDPLLDEGFKNTKTFFSLLGVSYYVTREENASLISNLFSHVPPGSSIVFDYADETLFTAKGTSNRVEHMVKMAAASGEPMKSCFTYQEIEHLLESSGLLIYEHLSPDDINDLFFSNRKDNLSAFETIHYIHAVKK.

S-adenosyl-L-methionine-binding positions include Asp134 and 163-164; that span reads DF.

Belongs to the UPF0677 family.

May be involved in polyketide synthesis. The polypeptide is Putative S-adenosyl-L-methionine-dependent methyltransferase YktD (yktD) (Bacillus subtilis (strain 168)).